Reading from the N-terminus, the 296-residue chain is dTDP-4-dehydrorhamnose reductase (296 aa).

Residues 10–12, 35–36, and 59–61 each bind NADH; these read GQI, DL, and AYT. NADPH contacts are provided by residues 11–12, 35–36, and 59–61; these read QI, DL, and AYT. Residue 100–101 coordinates dTDP-beta-L-rhamnose; sequence TD. Positions 124 and 128 each coordinate NADH. NADPH contacts are provided by Tyr124 and Lys128. Residue Tyr124 is the Proton donor/acceptor of the active site. Trp149 lines the dTDP-beta-L-rhamnose pocket.

This sequence belongs to the dTDP-4-dehydrorhamnose reductase family. In terms of assembly, homodimer. Mg(2+) is required as a cofactor.

The catalysed reaction is dTDP-beta-L-rhamnose + NADP(+) = dTDP-4-dehydro-beta-L-rhamnose + NADPH + H(+). The protein operates within carbohydrate biosynthesis; dTDP-L-rhamnose biosynthesis. Functionally, involved in the biosynthesis of the dTDP-L-rhamnose which is an important component of lipopolysaccharide (LPS). Catalyzes the reduction of dTDP-6-deoxy-L-lyxo-4-hexulose to yield dTDP-L-rhamnose. RmlD uses NADH and NADPH nearly equally well. The sequence is that of dTDP-4-dehydrorhamnose reductase from Sinorhizobium fredii (strain NBRC 101917 / NGR234).